The primary structure comprises 182 residues: Type-1 fimbrial protein, A chain (182 aa).

Residues 1 to 23 form the signal peptide; sequence MKIKTLAIVVLSALSLSSTAALA. Cysteines 44 and 84 form a disulfide.

It belongs to the fimbrial protein family.

It is found in the fimbrium. Functionally, fimbriae (also called pili), polar filaments radiating from the surface of the bacterium to a length of 0.5-1.5 micrometers and numbering 100-300 per cell, enable bacteria to colonize the epithelium of specific host organs. In Escherichia coli (strain K12), this protein is Type-1 fimbrial protein, A chain (fimA).